Here is a 689-residue protein sequence, read N- to C-terminus: Methionine--tRNA ligase (689 aa).

A 'HIGH' region motif is present at residues 15–25; sequence PYANGPIHLGH. The Zn(2+) site is built by C146, C149, C159, and C162. Residues 332 to 336 carry the 'KMSKS' region motif; the sequence is KMSKS. K335 contributes to the ATP binding site. The region spanning 588-689 is the tRNA-binding domain; it reads DFAKIDLRIA…EGAQPGMRVK (102 aa).

It belongs to the class-I aminoacyl-tRNA synthetase family. MetG type 1 subfamily. As to quaternary structure, homodimer. It depends on Zn(2+) as a cofactor.

The protein localises to the cytoplasm. It catalyses the reaction tRNA(Met) + L-methionine + ATP = L-methionyl-tRNA(Met) + AMP + diphosphate. Its function is as follows. Is required not only for elongation of protein synthesis but also for the initiation of all mRNA translation through initiator tRNA(fMet) aminoacylation. The polypeptide is Methionine--tRNA ligase (Shewanella baltica (strain OS155 / ATCC BAA-1091)).